Here is a 278-residue protein sequence, read N- to C-terminus: 2-(acetamidomethylene)succinate hydrolase (278 aa).

Residues isoleucine 41 and 106-107 (SL) each bind chloride. Catalysis depends on serine 106, which acts as the Nucleophile. Residues aspartate 130 and histidine 258 contribute to the active site.

The protein belongs to the AB hydrolase superfamily. As to quaternary structure, homodimer.

The enzyme catalyses 2-(acetamidomethylene)succinate + 2 H2O + H(+) = succinate semialdehyde + acetate + NH4(+) + CO2. The protein operates within cofactor degradation; B6 vitamer degradation. Functionally, catalyzes the final reaction in the degradation of vitamin B6 from (E)-2-(acetamidomethylene)succinate (E-2AMS) to produce succinic semialdehyde, acetate, ammonia and carbon dioxide. This chain is 2-(acetamidomethylene)succinate hydrolase, found in Mesorhizobium japonicum (strain LMG 29417 / CECT 9101 / MAFF 303099) (Mesorhizobium loti (strain MAFF 303099)).